A 236-amino-acid polypeptide reads, in one-letter code: 28 kDa antigen (236 aa).

The N-terminal stretch at 1-22 (MPNRRRCKLSTAISTVATLAIA) is a signal peptide. The tract at residues 76–105 (PVPSLTGTDDPGNGLRTPGLTSPDLTNQEL) is disordered. Positions 94–105 (GLTSPDLTNQEL) are enriched in polar residues.

It to M.tuberculosis ERP.

The polypeptide is 28 kDa antigen (Mycobacterium leprae (strain TN)).